A 463-amino-acid polypeptide reads, in one-letter code: 6-phosphofructo-2-kinase/fructose-2,6-bisphosphatase 3 (463 aa).

The tract at residues 1 to 246 (MPLELTQSRV…VYYLMNIHWQ (246 aa)) is 6-phosphofructo-2-kinase. 42–50 (GLPARGKTY) contributes to the ATP binding site. The beta-D-fructose 6-phosphate site is built by Arg75 and Arg99. Asp125 is a catalytic residue. Residues Thr127 and Arg133 each contribute to the beta-D-fructose 6-phosphate site. Residue Cys155 is part of the active site. An ATP-binding site is contributed by 164 to 169 (NIMEVK). 3 residues coordinate beta-D-fructose 6-phosphate: Lys169, Arg191, and Tyr195. Positions 247–463 (PRTIYLCRHG…PNPLMRSNSH (217 aa)) are fructose-2,6-bisphosphatase. Position 254 (Arg254) interacts with beta-D-fructose 2,6-bisphosphate. His255 (tele-phosphohistidine intermediate) is an active-site residue. Asn261 and Gly267 together coordinate beta-D-fructose 2,6-bisphosphate. Glu324 functions as the Proton donor/acceptor in the catalytic mechanism. Position 335 (Tyr335) interacts with beta-D-fructose 2,6-bisphosphate. 346 to 349 (YALA) is a binding site for ATP. Lys353, Tyr364, and Gln390 together coordinate beta-D-fructose 2,6-bisphosphate. ATP is bound by residues 390–394 (QAVCV) and Tyr426. The segment at 444 to 463 (RERSEDAKKGPNPLMRSNSH) is disordered. Position 462 is a phosphoserine; by AMPK and PKA (Ser462).

It in the C-terminal section; belongs to the phosphoglycerate mutase family. In terms of assembly, homodimer. Forms a heterodimer with PFKFB2. Phosphorylation by AMPK stimulates activity. Brain.

The enzyme catalyses beta-D-fructose 2,6-bisphosphate + H2O = beta-D-fructose 6-phosphate + phosphate. It carries out the reaction beta-D-fructose 6-phosphate + ATP = beta-D-fructose 2,6-bisphosphate + ADP + H(+). Its function is as follows. Catalyzes both the synthesis and degradation of fructose 2,6-bisphosphate. This is 6-phosphofructo-2-kinase/fructose-2,6-bisphosphatase 3 (PFKFB3) from Bos taurus (Bovine).